Reading from the N-terminus, the 212-residue chain is Imidazole glycerol phosphate synthase subunit HisH 2 (212 aa).

In terms of domain architecture, Glutamine amidotransferase type-1 spans arginine 3–proline 212. Residue cysteine 82 is the Nucleophile of the active site. Residues histidine 192 and glutamate 194 contribute to the active site.

In terms of assembly, heterodimer of HisH and HisF.

The protein localises to the cytoplasm. The catalysed reaction is 5-[(5-phospho-1-deoxy-D-ribulos-1-ylimino)methylamino]-1-(5-phospho-beta-D-ribosyl)imidazole-4-carboxamide + L-glutamine = D-erythro-1-(imidazol-4-yl)glycerol 3-phosphate + 5-amino-1-(5-phospho-beta-D-ribosyl)imidazole-4-carboxamide + L-glutamate + H(+). It catalyses the reaction L-glutamine + H2O = L-glutamate + NH4(+). The protein operates within amino-acid biosynthesis; L-histidine biosynthesis; L-histidine from 5-phospho-alpha-D-ribose 1-diphosphate: step 5/9. In terms of biological role, IGPS catalyzes the conversion of PRFAR and glutamine to IGP, AICAR and glutamate. The HisH subunit provides the glutamine amidotransferase activity that produces the ammonia necessary to HisF for the synthesis of IGP and AICAR. This is Imidazole glycerol phosphate synthase subunit HisH 2 from Nitrobacter winogradskyi (strain ATCC 25391 / DSM 10237 / CIP 104748 / NCIMB 11846 / Nb-255).